Consider the following 201-residue polypeptide: Small ribosomal subunit protein uS4 (201 aa).

Positions 26-48 are disordered; that stretch reads LSKKNYPPGQHGNSRKRKTSEYG. Positions 92–155 constitute an S4 RNA-binding domain; the sequence is GRLDNVVFRL…KSLEVIANSL (64 aa).

The protein belongs to the universal ribosomal protein uS4 family. In terms of assembly, part of the 30S ribosomal subunit. Contacts protein S5. The interaction surface between S4 and S5 is involved in control of translational fidelity.

In terms of biological role, one of the primary rRNA binding proteins, it binds directly to 16S rRNA where it nucleates assembly of the body of the 30S subunit. Functionally, with S5 and S12 plays an important role in translational accuracy. The polypeptide is Small ribosomal subunit protein uS4 (Bacteroides thetaiotaomicron (strain ATCC 29148 / DSM 2079 / JCM 5827 / CCUG 10774 / NCTC 10582 / VPI-5482 / E50)).